Here is a 426-residue protein sequence, read N- to C-terminus: tRNA(Ile)-lysidine synthase (426 aa).

21–26 (SGGLDS) contacts ATP.

This sequence belongs to the tRNA(Ile)-lysidine synthase family.

It localises to the cytoplasm. The catalysed reaction is cytidine(34) in tRNA(Ile2) + L-lysine + ATP = lysidine(34) in tRNA(Ile2) + AMP + diphosphate + H(+). Its function is as follows. Ligates lysine onto the cytidine present at position 34 of the AUA codon-specific tRNA(Ile) that contains the anticodon CAU, in an ATP-dependent manner. Cytidine is converted to lysidine, thus changing the amino acid specificity of the tRNA from methionine to isoleucine. The protein is tRNA(Ile)-lysidine synthase of Enterobacter sp. (strain 638).